The chain runs to 811 residues: Metal transporter cnnm-1 (811 aa).

Positions 1–24 (MSASCLRLLTLSLFILGQCNVTAA) are cleaved as a signal peptide. Asn20, Asn49, Asn61, and Asn122 each carry an N-linked (GlcNAc...) asparagine glycan. The Extracellular portion of the chain corresponds to 25-204 (QNGVDDEVTT…KEYFLPLPLQ (180 aa)). Residues 197 to 376 (YFLPLPLQIA…TDNGQVSNEL (180 aa)) enclose the CNNM transmembrane domain. A helical membrane pass occupies residues 205-225 (IACIGFLLCLSALFSGLTLGL). Over 226 to 259 (MSLTPQELELVIKSGAIKEQKCAAKILPVRKKGN) the chain is Cytoplasmic. A helical membrane pass occupies residues 260 to 280 (LLLCSLLLGNVIVNSAISILM). Residues 281-284 (GELT) lie on the Extracellular side of the membrane. Residues 285–305 (TGIYALIGSTMGIVIFGEILP) traverse the membrane as a helical segment. At 306–315 (QSICVKKGLE) the chain is on the cytoplasmic side. A helical membrane pass occupies residues 316 to 336 (VGAHTISITQLFIFLTFPIAW). Over 337–811 (PVSKLLDCLL…EEEMALLDQP (475 aa)) the chain is Extracellular. 2 CBS domains span residues 394 to 456 (MTKI…NFTV) and 462 to 530 (YHKH…INDE). N-linked (GlcNAc...) asparagine glycans are attached at residues Asn435 and Asn453. The tract at residues 741–760 (DVSHNSSAHNSNLSLVEKPG) is disordered. The span at 743-755 (SHNSSAHNSNLSL) shows a compositional bias: low complexity. Asn745 and Asn752 each carry an N-linked (GlcNAc...) asparagine glycan.

The protein belongs to the ACDP family. In terms of tissue distribution, highly expressed in the intestine and in neurons, but it is also expressed in a variety of tissues including the pharynx, hypodermis, rectum and in muscles.

It localises to the basolateral cell membrane. Its function is as follows. Probable metal transporter. Probably acts redundantly with the other metal transport proteins cnnm-2, cnnm-3, cnnm-4 and cnnm-5 to regulate Mg(2+) homeostasis. Promotes postembryonic gonad development by regulating Mg(2+) levels, probably via AMPK signaling. In Caenorhabditis elegans, this protein is Metal transporter cnnm-1.